A 292-amino-acid polypeptide reads, in one-letter code: MNHLLDERKRRLSQFHEIIKKRPIETRPVDIPDGVFSQCEQCNSAIYNKDLEHNYEVCPYCSYHFKINAVKRLKYTLDEDTFKPLFENITSKNPLGMPEYEEKLDKGMRMAKMNEAFLAGTGKIDGQNLAIGVLDSYFMMGSMGSVVGERITRLIEHAAKHNLPLVIFSASGGARMQEGILSLMQMAKTSGALNLLDEKGLVYISVMTNPTTGGVAASFASLGDINIAEKSSLIGFAGARVIKQTIGQDLPAGFQTDAFQLQKGQVDLVVLRSQLKKTLSTLLKLHAKKVTS.

Residues 35-292 (VFSQCEQCNS…LKLHAKKVTS (258 aa)) form the CoA carboxyltransferase N-terminal domain. Zn(2+)-binding residues include Cys39, Cys42, Cys58, and Cys61. The C4-type zinc-finger motif lies at 39–61 (CEQCNSAIYNKDLEHNYEVCPYC).

This sequence belongs to the AccD/PCCB family. Acetyl-CoA carboxylase is a heterohexamer composed of biotin carboxyl carrier protein (AccB), biotin carboxylase (AccC) and two subunits each of ACCase subunit alpha (AccA) and ACCase subunit beta (AccD). Requires Zn(2+) as cofactor.

It localises to the cytoplasm. It catalyses the reaction N(6)-carboxybiotinyl-L-lysyl-[protein] + acetyl-CoA = N(6)-biotinyl-L-lysyl-[protein] + malonyl-CoA. The protein operates within lipid metabolism; malonyl-CoA biosynthesis; malonyl-CoA from acetyl-CoA: step 1/1. In terms of biological role, component of the acetyl coenzyme A carboxylase (ACC) complex. Biotin carboxylase (BC) catalyzes the carboxylation of biotin on its carrier protein (BCCP) and then the CO(2) group is transferred by the transcarboxylase to acetyl-CoA to form malonyl-CoA. This Acholeplasma laidlawii (strain PG-8A) protein is Acetyl-coenzyme A carboxylase carboxyl transferase subunit beta.